A 539-amino-acid polypeptide reads, in one-letter code: Probable protein kinase UbiB (539 aa).

The region spanning 125-493 is the Protein kinase domain; the sequence is RFDVEPLASA…RRRQGDRWAL (369 aa). ATP contacts are provided by residues 131 to 139 and Lys-153; that span reads LASASVAQV. Asp-288 (proton acceptor) is an active-site residue. A run of 2 helical transmembrane segments spans residues 495 to 515 and 517 to 537; these read LLGAGLLGGGAVLAASAAEAA and LAAPAAWPAWLMLAAGLYLIV.

It belongs to the ABC1 family. UbiB subfamily.

The protein localises to the cell inner membrane. Its pathway is cofactor biosynthesis; ubiquinone biosynthesis [regulation]. Its function is as follows. Is probably a protein kinase regulator of UbiI activity which is involved in aerobic coenzyme Q (ubiquinone) biosynthesis. This Pseudomonas putida (strain W619) protein is Probable protein kinase UbiB.